We begin with the raw amino-acid sequence, 282 residues long: Protease HtpX homolog (282 aa).

2 helical membrane passes run 6–26 (TFIL…LIGG) and 28–48 (QGVI…YFFS). Zn(2+) is bound at residue H130. Residue E131 is part of the active site. Zn(2+) is bound at residue H134. 2 helical membrane-spanning segments follow: residues 140–160 (ILIG…ANFA) and 177–197 (ILMI…QMAI). E202 provides a ligand contact to Zn(2+).

It belongs to the peptidase M48B family. Zn(2+) is required as a cofactor.

Its subcellular location is the cell inner membrane. The polypeptide is Protease HtpX homolog (Campylobacter hominis (strain ATCC BAA-381 / DSM 21671 / CCUG 45161 / LMG 19568 / NCTC 13146 / CH001A)).